Consider the following 218-residue polypeptide: Oxidoreductase claN (218 aa).

Lysine 38, aspartate 57, and asparagine 82 together coordinate NADP(+). The Proton donor role is filled by serine 134. Tyrosine 148, lysine 152, and threonine 183 together coordinate NADP(+). The Proton acceptor role is filled by tyrosine 148. Residue lysine 152 is the Lowers pKa of active site Tyr of the active site.

This sequence belongs to the short-chain dehydrogenases/reductases (SDR) family.

It functions in the pathway pigment biosynthesis. Functionally, oxidoreductase; part of the gene cluster that mediates the biosynthesis of the bianthraquinone cladofulvin, a conidial pigment not required for virulence but that plays a role in fitness and resistance to environmental stresses including UV light and low-temperature stress. The pathway begins with the synthesis of atrochrysone thioester by the polyketide synthase (PKS) claG. The atrochrysone carboxyl ACP thioesterase claF then breaks the thioester bond and releases the atrochrysone carboxylic acid from claG. This compound is decarboxylated by claH to yield emodin, which is further converted to chrysophanol hydroquinone by the reductase claC and the dehydratase claB. The cytochrome P450 monooxygenase claM then catalyzes the dimerization of nataloe-emodin to cladofulvin. This chain is Oxidoreductase claN, found in Passalora fulva (Tomato leaf mold).